We begin with the raw amino-acid sequence, 901 residues long: Modifier of cell death (901 aa).

Disordered regions lie at residues 147–169 (AQKR…PRAA) and 218–245 (PRKS…SPSP). The segment at 259-282 (FKCAECGDGFPVMDRLCDHMIKQH) adopts a C2H2-type zinc-finger fold. 3 disordered regions span residues 494-528 (KKEH…DDVP), 682-717 (QERV…SHEE), and 779-901 (HKAI…WDDN). Residues 817 to 828 (EAAAKLIQAENE) show a composition bias toward low complexity. The span at 829–840 (MVVEEEEVEEPP) shows a compositional bias: acidic residues. Residues 846–866 (QVPKEKEVEVAEAEKLPEQVK) are compositionally biased toward basic and acidic residues.

Its function is as follows. Promotes programmed cell death. Its role in programmed cell death may be in conjunction with cell cycle regulatory factor efl-1 and the synthetic multivulva class B proteins dpl-1 and lin-35, and is independent of the ced-1, ced-8 and ced-9 pathways. This is Modifier of cell death from Caenorhabditis elegans.